We begin with the raw amino-acid sequence, 337 residues long: tRNA N6-adenosine threonylcarbamoyltransferase (337 aa).

The Fe cation site is built by H111 and H115. Substrate is bound by residues 134 to 138 (LVSGG), D167, G180, and N272. D300 lines the Fe cation pocket.

It belongs to the KAE1 / TsaD family. Requires Fe(2+) as cofactor.

It localises to the cytoplasm. The catalysed reaction is L-threonylcarbamoyladenylate + adenosine(37) in tRNA = N(6)-L-threonylcarbamoyladenosine(37) in tRNA + AMP + H(+). In terms of biological role, required for the formation of a threonylcarbamoyl group on adenosine at position 37 (t(6)A37) in tRNAs that read codons beginning with adenine. Is involved in the transfer of the threonylcarbamoyl moiety of threonylcarbamoyl-AMP (TC-AMP) to the N6 group of A37, together with TsaE and TsaB. TsaD likely plays a direct catalytic role in this reaction. This chain is tRNA N6-adenosine threonylcarbamoyltransferase, found in Cronobacter sakazakii (strain ATCC BAA-894) (Enterobacter sakazakii).